The chain runs to 653 residues: Transmembrane and coiled-coil domains protein 1 (653 aa).

Met1 carries the N-acetylmethionine modification. Disordered regions lie at residues 1–35, 58–78, 112–165, and 204–227; these read MEPS…QKLS, HQRR…ADPE, PPKM…APTS, and TSSA…TPDP. The Cytoplasmic segment spans residues 1 to 591; it reads MEPSGSEQLF…ARNLLGKLIN (591 aa). Over residues 20 to 34 the composition is skewed to basic and acidic residues; the sequence is QDAEARKQTESEQKL. Positions 64-74 are enriched in polar residues; sequence SVSPHDVQQIQ. The segment covering 113 to 125 has biased composition (basic residues); the sequence is PKMKRGTSLHSRR. Residues 135–144 are compositionally biased toward polar residues; that stretch reads PQINRKSGQE. Residues 153–165 are compositionally biased toward low complexity; that stretch reads RPRSSSTTDAPTS. Residues 204-218 are compositionally biased toward polar residues; it reads TSSAVASSTDGSIHT. Positions 228-313 form a coiled coil; the sequence is QRTKAAIAHL…RKLREVEQNG (86 aa). Residues Ser382 and Ser414 each carry the phosphoserine modification. The tract at residues 415–437 is disordered; it reads PKYGSEEDCSSATSGSVGANSTT. The segment covering 424-437 has biased composition (polar residues); the sequence is SSATSGSVGANSTT. A coiled-coil region spans residues 458–576; that stretch reads GFDALLHEIQ…QQQQVVQLEG (119 aa). 2 helical membrane passes run 592-612 and 625-645; these read ILLA…NCVV and LFLV…FSYV. Topologically, residues 646-653 are cytoplasmic; that stretch reads ERFFSSPR.

This sequence belongs to the TEX28 family. As to quaternary structure, may form homodimers and heterodimers with TMCC2 or TMCC3 via the coiled-coil domains. Interacts with ribosomal proteins RPL4 and RPS6.

Its subcellular location is the endoplasmic reticulum membrane. Functionally, endoplasmic reticulum membrane protein that promotes endoplasmic reticulum-associated endosome fission. Localizes to contact sites between the endoplasmic reticulum and endosomes and acts by promoting recruitment of the endoplasmic reticulum to endosome tubules for fission. Endosome membrane fission of early and late endosomes is essential to separate regions destined for lysosomal degradation from carriers to be recycled to the plasma membrane. The polypeptide is Transmembrane and coiled-coil domains protein 1 (Homo sapiens (Human)).